The sequence spans 466 residues: Ribulose bisphosphate carboxylase large chain (466 aa).

K4 carries the post-translational modification N6,N6,N6-trimethyllysine. Substrate contacts are provided by N113 and T163. K165 functions as the Proton acceptor in the catalytic mechanism. Residue K167 coordinates substrate. 3 residues coordinate Mg(2+): K191, D193, and E194. N6-carboxylysine is present on K191. The active-site Proton acceptor is the H284. Residues R285, H317, and S369 each coordinate substrate.

Belongs to the RuBisCO large chain family. Type I subfamily. Heterohexadecamer of 8 large chains and 8 small chains; disulfide-linked. The disulfide link is formed within the large subunit homodimers. It depends on Mg(2+) as a cofactor. Post-translationally, the disulfide bond which can form in the large chain dimeric partners within the hexadecamer appears to be associated with oxidative stress and protein turnover.

Its subcellular location is the plastid. It localises to the chloroplast. The enzyme catalyses 2 (2R)-3-phosphoglycerate + 2 H(+) = D-ribulose 1,5-bisphosphate + CO2 + H2O. It carries out the reaction D-ribulose 1,5-bisphosphate + O2 = 2-phosphoglycolate + (2R)-3-phosphoglycerate + 2 H(+). In terms of biological role, ruBisCO catalyzes two reactions: the carboxylation of D-ribulose 1,5-bisphosphate, the primary event in carbon dioxide fixation, as well as the oxidative fragmentation of the pentose substrate in the photorespiration process. Both reactions occur simultaneously and in competition at the same active site. This Aphelandra sinclairiana (Orange shrimp plant) protein is Ribulose bisphosphate carboxylase large chain.